The chain runs to 455 residues: uncharacterized protein (455 aa).

The first 27 residues, Met-1–Cys-27, serve as a signal peptide directing secretion. Residues Glu-29 to Ser-434 lie on the Extracellular side of the membrane. N-linked (GlcNAc...) asparagine glycosylation is found at Asn-136, Asn-148, Asn-210, and Asn-298. The disordered stretch occupies residues Ser-383 to Thr-402. N-linked (GlcNAc...) asparagine glycosylation is found at Asn-421 and Asn-432. Residues Ser-435–Phe-455 traverse the membrane as a helical segment.

It localises to the membrane. This is an uncharacterized protein from Dictyostelium discoideum (Social amoeba).